We begin with the raw amino-acid sequence, 381 residues long: Peptidoglycan glycosyltransferase MrdB (381 aa).

A run of 10 helical transmembrane segments spans residues 11 to 31 (FDLL…LLIF), 40 to 60 (KQGV…FIPF), 66 to 86 (WLFA…FMGS), 102 to 122 (ITLQ…AHLI), 132 to 152 (YDWG…ALIL), 156 to 176 (DLGT…IVGL), 180 to 200 (VWLP…HFLH), 263 to 283 (FGFL…LHLF), 297 to 317 (IVAL…IAMT), and 328 to 348 (LPLF…FAIL).

This sequence belongs to the SEDS family. MrdB/RodA subfamily.

The protein localises to the cell inner membrane. It catalyses the reaction [GlcNAc-(1-&gt;4)-Mur2Ac(oyl-L-Ala-gamma-D-Glu-L-Lys-D-Ala-D-Ala)](n)-di-trans,octa-cis-undecaprenyl diphosphate + beta-D-GlcNAc-(1-&gt;4)-Mur2Ac(oyl-L-Ala-gamma-D-Glu-L-Lys-D-Ala-D-Ala)-di-trans,octa-cis-undecaprenyl diphosphate = [GlcNAc-(1-&gt;4)-Mur2Ac(oyl-L-Ala-gamma-D-Glu-L-Lys-D-Ala-D-Ala)](n+1)-di-trans,octa-cis-undecaprenyl diphosphate + di-trans,octa-cis-undecaprenyl diphosphate + H(+). The protein operates within cell wall biogenesis; peptidoglycan biosynthesis. In terms of biological role, peptidoglycan polymerase that is essential for cell wall elongation. In Helicobacter pylori (strain J99 / ATCC 700824) (Campylobacter pylori J99), this protein is Peptidoglycan glycosyltransferase MrdB.